A 242-amino-acid chain; its full sequence is Triosephosphate isomerase (242 aa).

A substrate-binding site is contributed by 9–11 (NWK). Residue His90 is the Electrophile of the active site. Glu162 acts as the Proton acceptor in catalysis. Residues Gly168, Ser205, and 226–227 (GG) contribute to the substrate site.

The protein belongs to the triosephosphate isomerase family. In terms of assembly, homodimer.

It is found in the cytoplasm. It carries out the reaction D-glyceraldehyde 3-phosphate = dihydroxyacetone phosphate. The protein operates within carbohydrate biosynthesis; gluconeogenesis. It participates in carbohydrate degradation; glycolysis; D-glyceraldehyde 3-phosphate from glycerone phosphate: step 1/1. In terms of biological role, involved in the gluconeogenesis. Catalyzes stereospecifically the conversion of dihydroxyacetone phosphate (DHAP) to D-glyceraldehyde-3-phosphate (G3P). This chain is Triosephosphate isomerase, found in Azoarcus sp. (strain BH72).